Here is a 189-residue protein sequence, read N- to C-terminus: GTP cyclohydrolase 1 (189 aa).

Positions 78, 81, and 150 each coordinate Zn(2+).

This sequence belongs to the GTP cyclohydrolase I family. In terms of assembly, homomer.

The enzyme catalyses GTP + H2O = 7,8-dihydroneopterin 3'-triphosphate + formate + H(+). It participates in cofactor biosynthesis; 7,8-dihydroneopterin triphosphate biosynthesis; 7,8-dihydroneopterin triphosphate from GTP: step 1/1. The chain is GTP cyclohydrolase 1 from Bacillus mycoides (strain KBAB4) (Bacillus weihenstephanensis).